Reading from the N-terminus, the 459-residue chain is MPSKTDFTSSTMTPREIVQELDRHIVGQQAAKRSVAIALRNRWRRMQLPEELRNEVMPKNILMIGPTGVGKTEIARRLATLANAPFVKVEATRFTEVGYVGKDVEQIGRDLVDTAVKMYREQAKVRVRTQAEEYAEERILDVLLPRRSVGIGFDVDADVIRQEPSAHESETRAKFRRMLRSGELEEREIELDVAVNVSMDIMTPPGMEEMGQQLRQMFSNIGGGKSQKRKLTIKAARPLLIEEEAAKLVNEDEIRAAAIEACEQNGIVFIDEIDKVVKRGDTVGGGDVSREGVQRDLLPLVEGSNVSTKYGTIRTNHILFIASGAFHLTKPSDLIPELQGRFPIRVELDALSKADFIRILTEPKAALTKQYQELLKTEGVSLDFTEDAIDRIAEIAYLVNERQENIGARRLHTVLERLLEMLSYESPDRDGESVTVDADYVNAHLGELVKDPDLSRYIL.

Residues Val26, 68–73, Asp271, Glu337, and Arg409 each bind ATP; that span reads GVGKTE.

This sequence belongs to the ClpX chaperone family. HslU subfamily. As to quaternary structure, a double ring-shaped homohexamer of HslV is capped on each side by a ring-shaped HslU homohexamer. The assembly of the HslU/HslV complex is dependent on binding of ATP.

It localises to the cytoplasm. Functionally, ATPase subunit of a proteasome-like degradation complex; this subunit has chaperone activity. The binding of ATP and its subsequent hydrolysis by HslU are essential for unfolding of protein substrates subsequently hydrolyzed by HslV. HslU recognizes the N-terminal part of its protein substrates and unfolds these before they are guided to HslV for hydrolysis. The polypeptide is ATP-dependent protease ATPase subunit HslU (Xylella fastidiosa (strain 9a5c)).